We begin with the raw amino-acid sequence, 563 residues long: MAFPEYSPAASAATFADLQIHPRVLRAIGDVGYESPTAIQAATIPALMAGSDVVGLAQTGTGKTAAFAIPMLSKIDITSKVPQALVLVPTRELALQVAEAFGRYGAYLSQLNVLPIYGGSSYAVQLAGLRRGAQVVVGTPGRMIDHLERATLDLSRVDFLVLDEADEMLTMGFADDVERILSETPEYKQVALFSATMPPAIRKLSAKYLHDPFEVTCKAKTAVAENISQSYIQVARKMDALTRVLEVEPFEAMIVFVRTKQATEEIAEKLRARGFSAAAISGDVPQAQRERTITALRDGDIDILVATDVAARGLDVERISHVLNYDIPHDTESYVHRIGRTGRAGRSGAALIFVSPRELHLLKAIEKATRQTLTEAQLPTVEDVNTQRVAKFADSITNALGGPGIELFRRLVEEYEREHDVPMADIAAALAVQCRGGEAFLMAPDPPLSRRNRDQRRDRPQRPKRRPDLTTYRVAVGKRHKIGPGAIVGAIANEGGLHRSDFGQIRIGPDFSLVELPAKLPRATLKKLAQTRISGVLIDLRPYRPPDAARRHNGGKPRRKHVG.

A Q motif motif is present at residues 13-41; sequence ATFADLQIHPRVLRAIGDVGYESPTAIQA. In terms of domain architecture, Helicase ATP-binding spans 44–215; sequence IPALMAGSDV…AKYLHDPFEV (172 aa). 57 to 64 is an ATP binding site; it reads AQTGTGKT. A DEAD box motif is present at residues 163–166; sequence DEAD. One can recognise a Helicase C-terminal domain in the interval 226–385; the sequence is NISQSYIQVA…AQLPTVEDVN (160 aa). Disordered regions lie at residues 441-470 and 543-563; these read LMAPDPPLSRRNRDQRRDRPQRPKRRPDLT and YRPPDAARRHNGGKPRRKHVG. A compositionally biased stretch (basic and acidic residues) spans 451-461; that stretch reads RNRDQRRDRPQ. Residues 551 to 563 are compositionally biased toward basic residues; it reads RHNGGKPRRKHVG.

The protein belongs to the DEAD box helicase family. DeaD/CsdA subfamily.

It localises to the cytoplasm. The enzyme catalyses ATP + H2O = ADP + phosphate + H(+). DEAD-box RNA helicase involved in various cellular processes at low temperature, including ribosome biogenesis, mRNA degradation and translation initiation. The sequence is that of ATP-dependent RNA helicase DeaD from Mycobacterium tuberculosis (strain CDC 1551 / Oshkosh).